The following is a 564-amino-acid chain: Potassium-transporting ATPase potassium-binding subunit (564 aa).

10 helical membrane passes run 4–24 (YDYW…PFLG), 67–87 (TLAL…ILLF), 135–155 (VGLT…LVAL), 179–199 (LYGL…QGVP), 258–278 (FEVA…GHYV), 286–306 (AIIG…LWAE), 382–402 (AGLY…GLMI), 420–440 (LLVV…AIAA), 487–507 (LMLG…VLAL), and 528–548 (GPLF…LTFL).

The protein belongs to the KdpA family. As to quaternary structure, the system is composed of three essential subunits: KdpA, KdpB and KdpC.

The protein localises to the cell inner membrane. In terms of biological role, part of the high-affinity ATP-driven potassium transport (or Kdp) system, which catalyzes the hydrolysis of ATP coupled with the electrogenic transport of potassium into the cytoplasm. This subunit binds the periplasmic potassium ions and delivers the ions to the membrane domain of KdpB through an intramembrane tunnel. This chain is Potassium-transporting ATPase potassium-binding subunit, found in Pseudomonas fluorescens (strain Pf0-1).